Here is a 420-residue protein sequence, read N- to C-terminus: Histidine--tRNA ligase, chloroplastic (420 aa).

Belongs to the class-II aminoacyl-tRNA synthetase family.

Its subcellular location is the plastid. It is found in the chloroplast. It carries out the reaction tRNA(His) + L-histidine + ATP = L-histidyl-tRNA(His) + AMP + diphosphate + H(+). This chain is Histidine--tRNA ligase, chloroplastic, found in Gracilaria tenuistipitata var. liui (Red alga).